We begin with the raw amino-acid sequence, 140 residues long: Low calcium response locus protein T (140 aa).

The polypeptide is Low calcium response locus protein T (lcrT) (Yersinia pseudotuberculosis serotype I (strain IP32953)).